Consider the following 796-residue polypeptide: MGRRARDRRRQLQPQQRRERSGGGGGGGDDQAGWAGGYPEIVKENELFERYYREQRIVPDGEWDAFMAALREPLPATLRITGYKSHAREILHCLKEKYFRELQHLEVDGQKVEMPQALSWYPEELAWHTNLSRKILRKSPQLERFHQFLVSETECGNISRQEAVSMIPPLLLNVNPDHKILDMCAAPGSKTAQLIEMLHADMNVPFPKGFVIANDVDNKRCYLLVHQAKRLNSPCIMVVNHDASSIPNLQVDVDGRKETLFYDRILCDVPCSGDGTMRKNIDVWKKWTTQNSLQLHGLQLRIATRGVEQLAEGGRMVYSTCSLNPIENEAVIASLLEKSQGALELADVSSELPGLKRMPGITKWKVMLKDGQWFEEWKDVPSNRQTQIRPTMFPIKEEEKLKAMNLERCIRILPHHQNTGGFFVAVLIKKSPMPWNKRQPKVHQKLPGKTEDTEVTATNAGDGSEDATEKPTLAEDEEPKKVQELQNSDTEQSKKGVCGPPPSKKMKLFGFKEDPFVFLPEDDPLFLPIQKFYALDPSFPKMNLLTRTQEGKKRQLYMVSKELRNVLLNNSEKMKVINTGIKVWSRNSDGEQFGCAFRLAQEGIYTLYPFIHARIVNVCIEDVKILLTQENPFLSKFSSETQRKVKDMAMGSIVLKYEPDPEKPDDLQCPIVLCGWQGKTSLRAFVPKNERLHYLRMMGVEVFKAKRKEGESEGKTEEEVQCRPAQTEEGMDVEDKERDAVTKMEAEIDEESPRSPVESSAMEIENKSEDSDQCSKNTNSHINQESKDMNTNNVKD.

A compositionally biased stretch (basic residues) spans 1–11 (MGRRARDRRRQ). The disordered stretch occupies residues 1–36 (MGRRARDRRRQLQPQQRRERSGGGGGGGDDQAGWAG). Positions 22-36 (GGGGGGGDDQAGWAG) are enriched in gly residues. S-adenosyl-L-methionine-binding positions include 184 to 190 (CAAPGSK), Asp-215, Asp-242, and Asp-268. Cys-321 functions as the Nucleophile in the catalytic mechanism. 2 disordered regions span residues 435 to 501 (WNKR…CGPP) and 707 to 796 (RKEG…NVKD). Basic and acidic residues-rich tracts occupy residues 467–483 (ATEK…KKVQ), 708–721 (KEGE…EEVQ), and 733–746 (VEDK…KMEA). The span at 774–783 (CSKNTNSHIN) shows a compositional bias: polar residues. The span at 784–796 (QESKDMNTNNVKD) shows a compositional bias: basic and acidic residues.

It belongs to the class I-like SAM-binding methyltransferase superfamily. RsmB/NOP family. TRM4 subfamily.

It localises to the nucleus. The protein localises to the nucleolus. Its subcellular location is the cytoplasm. The protein resides in the mitochondrion. It is found in the cytoskeleton. It localises to the spindle. The protein localises to the secreted. Its subcellular location is the extracellular exosome. The catalysed reaction is cytidine(48) in tRNA + S-adenosyl-L-methionine = 5-methylcytidine(48) in tRNA + S-adenosyl-L-homocysteine + H(+). The enzyme catalyses cytidine(49) in tRNA + S-adenosyl-L-methionine = 5-methylcytidine(49) in tRNA + S-adenosyl-L-homocysteine + H(+). It carries out the reaction cytidine(50) in tRNA + S-adenosyl-L-methionine = 5-methylcytidine(50) in tRNA + S-adenosyl-L-homocysteine + H(+). It catalyses the reaction cytidine(34) in tRNA precursor + S-adenosyl-L-methionine = 5-methylcytidine(34) in tRNA precursor + S-adenosyl-L-homocysteine + H(+). The catalysed reaction is a cytidine in mRNA + S-adenosyl-L-methionine = a 5-methylcytidine in mRNA + S-adenosyl-L-homocysteine + H(+). Its function is as follows. RNA cytosine C(5)-methyltransferase that methylates cytosine to 5-methylcytosine (m5C) in various RNAs, such as tRNAs, mRNAs and some long non-coding RNAs (lncRNAs). Involved in various processes, such as epidermal stem cell differentiation, testis differentiation and maternal to zygotic transition during early development: acts by increasing protein synthesis; cytosine C(5)-methylation promoting tRNA stability and preventing mRNA decay. Methylates cytosine to 5-methylcytosine (m5C) at positions 34 and 48 of intron-containing tRNA(Leu)(CAA) precursors, and at positions 48, 49 and 50 of tRNA(Gly)(GCC) precursors. tRNA methylation is required generation of RNA fragments derived from tRNAs (tRFs). Also mediates C(5)-methylation of mitochondrial tRNAs. Catalyzes cytosine C(5)-methylation of mRNAs, leading to stabilize them and prevent mRNA decay. Cytosine C(5)-methylation of mRNAs also regulates mRNA export. Also mediates cytosine C(5)-methylation of non-coding RNAs, such as vault RNAs (vtRNAs), promoting their processing into regulatory small RNAs. Required for proper spindle assembly and chromosome segregation, independently of its methyltransferase activity. This is RNA cytosine-C(5)-methyltransferase NSUN2 from Gallus gallus (Chicken).